Reading from the N-terminus, the 205-residue chain is Guanylate kinase (205 aa).

The 179-residue stretch at 17 to 195 (SRLLVLSGPS…AVEAVERLLF (179 aa)) folds into the Guanylate kinase-like domain. 24 to 31 (GPSGVGKD) lines the ATP pocket.

Belongs to the guanylate kinase family.

Its subcellular location is the cytoplasm. The enzyme catalyses GMP + ATP = GDP + ADP. In terms of biological role, essential for recycling GMP and indirectly, cGMP. This chain is Guanylate kinase, found in Gloeobacter violaceus (strain ATCC 29082 / PCC 7421).